Consider the following 206-residue polypeptide: Pyridoxine/pyridoxamine 5'-phosphate oxidase (206 aa).

Residues 53 to 58 (RMVLLK), 68 to 69 (YT), K75, and Q97 each bind FMN. K58 serves as a coordination point for substrate. Substrate is bound by residues Y115, R119, and S123. FMN contacts are provided by residues 132-133 (QS) and W177. 183-185 (RLH) lines the substrate pocket. Residue R187 coordinates FMN.

It belongs to the pyridoxamine 5'-phosphate oxidase family. In terms of assembly, homodimer. The cofactor is FMN.

It catalyses the reaction pyridoxamine 5'-phosphate + O2 + H2O = pyridoxal 5'-phosphate + H2O2 + NH4(+). It carries out the reaction pyridoxine 5'-phosphate + O2 = pyridoxal 5'-phosphate + H2O2. The protein operates within cofactor metabolism; pyridoxal 5'-phosphate salvage; pyridoxal 5'-phosphate from pyridoxamine 5'-phosphate: step 1/1. Its pathway is cofactor metabolism; pyridoxal 5'-phosphate salvage; pyridoxal 5'-phosphate from pyridoxine 5'-phosphate: step 1/1. In terms of biological role, catalyzes the oxidation of either pyridoxine 5'-phosphate (PNP) or pyridoxamine 5'-phosphate (PMP) into pyridoxal 5'-phosphate (PLP). This chain is Pyridoxine/pyridoxamine 5'-phosphate oxidase, found in Agrobacterium fabrum (strain C58 / ATCC 33970) (Agrobacterium tumefaciens (strain C58)).